A 201-amino-acid polypeptide reads, in one-letter code: Probable quinol oxidase subunit 3 (201 aa).

Transmembrane regions (helical) follow at residues 20–40 (LGFW…FATL), 62–82 (LVLI…IAIY), 91–111 (LMLI…GFEI), 133–153 (FFIL…WIIC), and 180–200 (FLDV…MVFS).

The protein belongs to the cytochrome c oxidase subunit 3 family.

The protein resides in the cell membrane. The enzyme catalyses 2 a quinol + O2 = 2 a quinone + 2 H2O. Its function is as follows. Catalyzes quinol oxidation with the concomitant reduction of oxygen to water. The sequence is that of Probable quinol oxidase subunit 3 (qoxC) from Staphylococcus saprophyticus subsp. saprophyticus (strain ATCC 15305 / DSM 20229 / NCIMB 8711 / NCTC 7292 / S-41).